Consider the following 688-residue polypeptide: Polyribonucleotide nucleotidyltransferase (688 aa).

Mg(2+) contacts are provided by aspartate 484 and aspartate 490. The KH domain occupies 550–609 (PTTEIFNVAPDKIVEIIGQGGRVIKEIVEKFEVKIDLNKPSGEVKIMGNKERVLKTKEFI). Positions 626 to 688 (DEVLEAQVKR…NKGKIALDLA (63 aa)) constitute an S1 motif domain.

This sequence belongs to the polyribonucleotide nucleotidyltransferase family. Requires Mg(2+) as cofactor.

It localises to the cytoplasm. The enzyme catalyses RNA(n+1) + phosphate = RNA(n) + a ribonucleoside 5'-diphosphate. In terms of biological role, involved in mRNA degradation. Catalyzes the phosphorolysis of single-stranded polyribonucleotides processively in the 3'- to 5'-direction. This is Polyribonucleotide nucleotidyltransferase from Helicobacter pylori (strain HPAG1).